Reading from the N-terminus, the 482-residue chain is Glycogen synthase (482 aa).

An ADP-alpha-D-glucose-binding site is contributed by Lys-21.

Belongs to the glycosyltransferase 1 family. Bacterial/plant glycogen synthase subfamily.

It catalyses the reaction [(1-&gt;4)-alpha-D-glucosyl](n) + ADP-alpha-D-glucose = [(1-&gt;4)-alpha-D-glucosyl](n+1) + ADP + H(+). Its pathway is glycan biosynthesis; glycogen biosynthesis. Functionally, synthesizes alpha-1,4-glucan chains using ADP-glucose. This chain is Glycogen synthase, found in Clostridium perfringens (strain 13 / Type A).